The primary structure comprises 216 residues: Octanoyltransferase (216 aa).

The 176-residue stretch at Ser32 to Gln207 folds into the BPL/LPL catalytic domain. Residues Arg71 to His78, Ser138 to Gly140, and Gly151 to Ala153 each bind substrate. The active-site Acyl-thioester intermediate is Cys169.

It belongs to the LipB family.

The protein resides in the cytoplasm. It catalyses the reaction octanoyl-[ACP] + L-lysyl-[protein] = N(6)-octanoyl-L-lysyl-[protein] + holo-[ACP] + H(+). It participates in protein modification; protein lipoylation via endogenous pathway; protein N(6)-(lipoyl)lysine from octanoyl-[acyl-carrier-protein]: step 1/2. In terms of biological role, catalyzes the transfer of endogenously produced octanoic acid from octanoyl-acyl-carrier-protein onto the lipoyl domains of lipoate-dependent enzymes. Lipoyl-ACP can also act as a substrate although octanoyl-ACP is likely to be the physiological substrate. This chain is Octanoyltransferase, found in Shewanella frigidimarina (strain NCIMB 400).